Here is a 645-residue protein sequence, read N- to C-terminus: Threonine--tRNA ligase (645 aa).

The TGS domain occupies 1 to 63 (MEQINIQFPD…ETDGSIEIVT (63 aa)). The interval 242-540 (DHRKIGKELE…LTEETKGAFP (299 aa)) is catalytic. Residues cysteine 336, histidine 387, and histidine 517 each contribute to the Zn(2+) site.

It belongs to the class-II aminoacyl-tRNA synthetase family. As to quaternary structure, homodimer. The cofactor is Zn(2+).

The protein resides in the cytoplasm. It carries out the reaction tRNA(Thr) + L-threonine + ATP = L-threonyl-tRNA(Thr) + AMP + diphosphate + H(+). Its function is as follows. Catalyzes the attachment of threonine to tRNA(Thr) in a two-step reaction: L-threonine is first activated by ATP to form Thr-AMP and then transferred to the acceptor end of tRNA(Thr). Also edits incorrectly charged L-seryl-tRNA(Thr). This is Threonine--tRNA ligase from Staphylococcus aureus (strain NCTC 8325 / PS 47).